The following is a 444-amino-acid chain: Putative GTP cyclohydrolase URC1 (444 aa).

268-272 (RVHDE) is a GTP binding site. Residues Cys-273, Cys-284, and Cys-286 each coordinate Zn(2+). GTP is bound at residue 315–317 (EGR). Residue Asp-353 is the Proton acceptor of the active site. Arg-355 acts as the Nucleophile in catalysis. 2 residues coordinate GTP: Ser-377 and Lys-382.

This sequence belongs to the GTP cyclohydrolase II family.

The protein localises to the cytoplasm. The protein resides in the nucleus. In terms of biological role, involved in uracil catabolism. The sequence is that of Putative GTP cyclohydrolase URC1 (URC1) from Lachancea kluyveri (Yeast).